A 452-amino-acid polypeptide reads, in one-letter code: Transcription factor AP-2-delta (452 aa).

Serine 239 is modified (phosphoserine; by PKA). The tract at residues 280 to 410 is H-S-H (helix-span-helix), dimerization; sequence RRKAANVTLL…VLSEMLNYLE (131 aa). Positions 416–452 are disordered; it reads KNGGAADSGQGHANSEKAPLRKTSEAAVKEGKTEKTD. The segment covering 429 to 452 has biased composition (basic and acidic residues); that stretch reads NSEKAPLRKTSEAAVKEGKTEKTD.

The protein belongs to the AP-2 family. Binds DNA as a dimer. Can form homodimers or heterodimers with other AP-2 family members. As to expression, highly expressed in brain, placenta, skeletal muscle, thymus, small intestine, and prostate, and expressed at lower levels in leukocyte, spleen, testis, ovary and colon. Barely detectable in heart, kidney, liver, lung or pancreas.

Its subcellular location is the nucleus. Functionally, sequence-specific DNA-binding protein that interacts with inducible viral and cellular enhancer elements to regulate transcription of selected genes. AP-2 factors bind to the consensus sequence 5'-GCCNNNGGC-3' and activate genes involved in a large spectrum of important biological functions including proper eye, face, body wall, limb and neural tube development. They also suppress a number of genes including MCAM/MUC18, C/EBP alpha and MYC. The sequence is that of Transcription factor AP-2-delta from Homo sapiens (Human).